A 448-amino-acid chain; its full sequence is Vicilin Cor a 11.0101 (448 aa).

Over residues 1 to 44 (MLPKEDPELKKCKHKCRDERQFDEQQRRDGKQICEEKARERQQE) the composition is skewed to basic and acidic residues. The disordered stretch occupies residues 1 to 66 (MLPKEDPELK…QEENPYVFQD (66 aa)). Asn47 carries N-linked (GlcNAc...) asparagine glycosylation. 2 Cupin type-1 domains span residues 84–220 (ENFT…EQLE) and 263–418 (INLL…REVE). Residue Asn301 is glycosylated (N-linked (GlcNAc...) asparagine). Cu cation contacts are provided by Cys333, His335, and His362.

The protein belongs to the 7S seed storage protein family. As to quaternary structure, homotrimer. Homohexamer. Post-translationally, N-glycosylated at Asn-301 mostly with xylosylated paucimannosidic-type N-glycan MMX (an N-linked glycan with beta-1,2-xylose residue in the structure) and also with MMXF (a complex N-linked glycan with alpha-1,3-fucose and beta-1,2-xylose residues in the structure). In terms of processing, a mixture of proteolytically processed and unprocessed subunits exist. As to expression, expressed in seed (at protein level). Expressed in seed.

Seed storage protein. Does not have superoxide dismutase (SOD) activity. This is Vicilin Cor a 11.0101 from Corylus avellana (European hazel).